Reading from the N-terminus, the 368-residue chain is S-adenosylmethionine decarboxylase proenzyme (368 aa).

Residues glutamate 26 and glutamate 29 contribute to the active site. Catalysis depends on serine 83, which acts as the Schiff-base intermediate with substrate; via pyruvic acid. Serine 83 is subject to Pyruvic acid (Ser); by autocatalysis. The active-site Proton donor; for catalytic activity is cysteine 97. Residues serine 246 and histidine 261 each act as proton acceptor; for processing activity in the active site.

This sequence belongs to the eukaryotic AdoMetDC family. Heterotetramer of two alpha and two beta chains. Pyruvate serves as cofactor. Post-translationally, is synthesized initially as an inactive proenzyme. Formation of the active enzyme involves a self-maturation process in which the active site pyruvoyl group is generated from an internal serine residue via an autocatalytic post-translational modification. Two non-identical subunits are generated from the proenzyme in this reaction, and the pyruvate is formed at the N-terminus of the alpha chain, which is derived from the carboxyl end of the proenzyme. The post-translation cleavage follows an unusual pathway, termed non-hydrolytic serinolysis, in which the side chain hydroxyl group of the serine supplies its oxygen atom to form the C-terminus of the beta chain, while the remainder of the serine residue undergoes an oxidative deamination to produce ammonia and the pyruvoyl group blocking the N-terminus of the alpha chain.

It catalyses the reaction S-adenosyl-L-methionine + H(+) = S-adenosyl 3-(methylsulfanyl)propylamine + CO2. The protein operates within amine and polyamine biosynthesis; S-adenosylmethioninamine biosynthesis; S-adenosylmethioninamine from S-adenosyl-L-methionine: step 1/1. Essential for biosynthesis of the polyamines spermidine and spermine. Polyamines are essential for cell proliferation and are implicated in cellular processes, ranging from DNA replication to apoptosis. This chain is S-adenosylmethionine decarboxylase proenzyme, found in Caenorhabditis elegans.